Reading from the N-terminus, the 304-residue chain is Probable 5-dehydro-4-deoxyglucarate dehydratase (304 aa).

This sequence belongs to the DapA family.

It catalyses the reaction 5-dehydro-4-deoxy-D-glucarate + H(+) = 2,5-dioxopentanoate + CO2 + H2O. It functions in the pathway carbohydrate acid metabolism; D-glucarate degradation; 2,5-dioxopentanoate from D-glucarate: step 2/2. The polypeptide is Probable 5-dehydro-4-deoxyglucarate dehydratase (Rhodococcus opacus (strain B4)).